Here is a 307-residue protein sequence, read N- to C-terminus: Putative ankyrin repeat protein L59 (307 aa).

ANK repeat units lie at residues 41–67 (LFNK…NLEK), 68–97 (IDNK…DTTN), 98–127 (HNYS…DIRA), 129–157 (DDEA…DVRN), 158–187 (RNDF…DIRT), 188–217 (DDDY…NIHA), 219–247 (GDSA…DIRI), 248–277 (DNDY…DIGA), and 279–307 (NNYA…LKLY).

In Acanthamoeba polyphaga (Amoeba), this protein is Putative ankyrin repeat protein L59.